A 313-amino-acid polypeptide reads, in one-letter code: Methionyl-tRNA formyltransferase (313 aa).

S113–P116 contacts (6S)-5,6,7,8-tetrahydrofolate.

It belongs to the Fmt family.

It catalyses the reaction L-methionyl-tRNA(fMet) + (6R)-10-formyltetrahydrofolate = N-formyl-L-methionyl-tRNA(fMet) + (6S)-5,6,7,8-tetrahydrofolate + H(+). In terms of biological role, attaches a formyl group to the free amino group of methionyl-tRNA(fMet). The formyl group appears to play a dual role in the initiator identity of N-formylmethionyl-tRNA by promoting its recognition by IF2 and preventing the misappropriation of this tRNA by the elongation apparatus. The chain is Methionyl-tRNA formyltransferase from Francisella tularensis subsp. mediasiatica (strain FSC147).